We begin with the raw amino-acid sequence, 120 residues long: Small ribosomal subunit protein uS17m (120 aa).

A mitochondrion-targeting transit peptide spans 1–20 (MSIVRSSVHAKWVVGKVIGT).

Belongs to the universal ribosomal protein uS17 family. Component of the mitochondrial ribosome small subunit (28S) which comprises a 12S rRNA and about 30 distinct proteins.

The protein resides in the mitochondrion. In Mus musculus (Mouse), this protein is Small ribosomal subunit protein uS17m (Mrps17).